The primary structure comprises 391 residues: Bifunctional enzyme IspD/IspF (391 aa).

Positions 1-230 (MLAAGRGKRA…KKKMQMFPDI (230 aa)) are 2-C-methyl-D-erythritol 4-phosphate cytidylyltransferase. A 2-C-methyl-D-erythritol 2,4-cyclodiphosphate synthase region spans residues 231 to 391 (RTGNGYDVHS…TVLYPGEIPK (161 aa)). 2 residues coordinate a divalent metal cation: D237 and H239. Residues 237 to 239 (DVH) and 263 to 264 (HS) each bind 4-CDP-2-C-methyl-D-erythritol 2-phosphate. H271 contributes to the a divalent metal cation binding site. 4-CDP-2-C-methyl-D-erythritol 2-phosphate contacts are provided by residues 285 to 287 (DIG), 361 to 364 (TTNE), F368, and R371.

The protein in the N-terminal section; belongs to the IspD/TarI cytidylyltransferase family. IspD subfamily. This sequence in the C-terminal section; belongs to the IspF family. It depends on a divalent metal cation as a cofactor.

It catalyses the reaction 2-C-methyl-D-erythritol 4-phosphate + CTP + H(+) = 4-CDP-2-C-methyl-D-erythritol + diphosphate. The enzyme catalyses 4-CDP-2-C-methyl-D-erythritol 2-phosphate = 2-C-methyl-D-erythritol 2,4-cyclic diphosphate + CMP. Its pathway is isoprenoid biosynthesis; isopentenyl diphosphate biosynthesis via DXP pathway; isopentenyl diphosphate from 1-deoxy-D-xylulose 5-phosphate: step 2/6. It functions in the pathway isoprenoid biosynthesis; isopentenyl diphosphate biosynthesis via DXP pathway; isopentenyl diphosphate from 1-deoxy-D-xylulose 5-phosphate: step 4/6. Its function is as follows. Bifunctional enzyme that catalyzes the formation of 4-diphosphocytidyl-2-C-methyl-D-erythritol from CTP and 2-C-methyl-D-erythritol 4-phosphate (MEP) (IspD), and catalyzes the conversion of 4-diphosphocytidyl-2-C-methyl-D-erythritol 2-phosphate (CDP-ME2P) to 2-C-methyl-D-erythritol 2,4-cyclodiphosphate (ME-CPP) with a corresponding release of cytidine 5-monophosphate (CMP) (IspF). In Bartonella quintana (strain Toulouse) (Rochalimaea quintana), this protein is Bifunctional enzyme IspD/IspF.